The following is a 240-amino-acid chain: Uridylate kinase (240 aa).

Position 12–15 (lysine 12–glycine 15) interacts with ATP. Glycine 54 provides a ligand contact to UMP. ATP-binding residues include glycine 55 and arginine 59. UMP is bound by residues aspartate 74 and threonine 135–threonine 142. Threonine 162, tyrosine 168, and aspartate 171 together coordinate ATP.

The protein belongs to the UMP kinase family. In terms of assembly, homohexamer.

It is found in the cytoplasm. The enzyme catalyses UMP + ATP = UDP + ADP. The protein operates within pyrimidine metabolism; CTP biosynthesis via de novo pathway; UDP from UMP (UMPK route): step 1/1. With respect to regulation, inhibited by UTP. Functionally, catalyzes the reversible phosphorylation of UMP to UDP. The sequence is that of Uridylate kinase from Xanthomonas campestris pv. campestris (strain ATCC 33913 / DSM 3586 / NCPPB 528 / LMG 568 / P 25).